A 269-amino-acid chain; its full sequence is Tryptophan synthase alpha chain (269 aa).

Catalysis depends on proton acceptor residues glutamate 49 and aspartate 60.

This sequence belongs to the TrpA family. In terms of assembly, tetramer of two alpha and two beta chains.

The enzyme catalyses (1S,2R)-1-C-(indol-3-yl)glycerol 3-phosphate + L-serine = D-glyceraldehyde 3-phosphate + L-tryptophan + H2O. Its pathway is amino-acid biosynthesis; L-tryptophan biosynthesis; L-tryptophan from chorismate: step 5/5. Functionally, the alpha subunit is responsible for the aldol cleavage of indoleglycerol phosphate to indole and glyceraldehyde 3-phosphate. The protein is Tryptophan synthase alpha chain of Photobacterium profundum (strain SS9).